Reading from the N-terminus, the 401-residue chain is Pyruvyl transferase 1 (401 aa).

The signal sequence occupies residues Met1–Arg30. The interval Asn38 to Asn64 is disordered. Over residues Pro39–Ser50 the composition is skewed to low complexity.

It belongs to the polysaccharide pyruvyl transferase family.

In terms of biological role, involved in cell wall biogenesis. Has a role in the addition of Gal-beta1,3 moieties to galactomannans and their subsequent pyruvylation. The chain is Pyruvyl transferase 1 (pvg1) from Schizosaccharomyces pombe (strain 972 / ATCC 24843) (Fission yeast).